Reading from the N-terminus, the 604-residue chain is Putative O-acetyltransferase SACOL0978 (604 aa).

11 helical membrane passes run 15-35 (YIPGLDGLRAIAVLGIIIYHL), 43-63 (GFLGVDTFFVISGYLITSLLL), 85-105 (LLPAVIVLLMVVGTATLLLKS), 150-170 (AIEEQFYIFFPVILVTLLLTI), 176-196 (IGFIFWGVSIISLGLMMFIYS), 212-232 (LQTLLLGVILAFLWPPFKLKN), 240-260 (YVIDSIGSLSFIVLILLFFII), 267-287 (IYDGGFYLISILTLFIIASVV), 310-330 (YSLYLWHFAVISFVHSYYVDG), 332-352 (IPVYVYFIDISLTIIFAELSY), and 377-397 (FIRMAIVVTLLIPFMLILVGA). Residues serine 459, aspartate 581, and histidine 584 contribute to the active site.

Belongs to the acyltransferase 3 family.

It is found in the cell membrane. This Staphylococcus aureus (strain COL) protein is Putative O-acetyltransferase SACOL0978.